Here is a 361-residue protein sequence, read N- to C-terminus: Chorismate synthase (361 aa).

The segment at 37 to 59 is disordered; that stretch reads TEADLQHDLDRRRPGTSRYTTQR. Basic and acidic residues predominate over residues 40 to 49; it reads DLQHDLDRRR. Arg48 and Arg54 together coordinate NADP(+). Residues 125–127, 238–239, Gly278, 293–297, and Arg319 contribute to the FMN site; these read RSS, NA, and KPTSS.

This sequence belongs to the chorismate synthase family. As to quaternary structure, homotetramer. Requires FMNH2 as cofactor.

It catalyses the reaction 5-O-(1-carboxyvinyl)-3-phosphoshikimate = chorismate + phosphate. It participates in metabolic intermediate biosynthesis; chorismate biosynthesis; chorismate from D-erythrose 4-phosphate and phosphoenolpyruvate: step 7/7. In terms of biological role, catalyzes the anti-1,4-elimination of the C-3 phosphate and the C-6 proR hydrogen from 5-enolpyruvylshikimate-3-phosphate (EPSP) to yield chorismate, which is the branch point compound that serves as the starting substrate for the three terminal pathways of aromatic amino acid biosynthesis. This reaction introduces a second double bond into the aromatic ring system. This is Chorismate synthase from Serratia proteamaculans (strain 568).